The following is a 151-amino-acid chain: Probable cGMP 3',5'-cyclic phosphodiesterase subunit delta (151 aa).

Belongs to the PDE6D/unc-119 family. Interacts with Pde6.

Its subcellular location is the nucleus. It is found in the cytoplasm. This chain is Probable cGMP 3',5'-cyclic phosphodiesterase subunit delta, found in Anopheles gambiae (African malaria mosquito).